A 290-amino-acid polypeptide reads, in one-letter code: Glyceraldehyde-3-phosphate dehydrogenase (290 aa).

NAD(+)-binding residues include Asp-13 and Arg-58. D-glyceraldehyde 3-phosphate contacts are provided by residues 129–131 (SCT), Thr-160, 189–190 (TG), and Arg-212. Cys-130 serves as the catalytic Nucleophile.

The protein belongs to the glyceraldehyde-3-phosphate dehydrogenase family. As to quaternary structure, homotetramer.

The protein resides in the cytoplasm. The catalysed reaction is D-glyceraldehyde 3-phosphate + phosphate + NAD(+) = (2R)-3-phospho-glyceroyl phosphate + NADH + H(+). It participates in carbohydrate degradation; glycolysis; pyruvate from D-glyceraldehyde 3-phosphate: step 1/5. In Lactarius deterrimus (False saffron milkcap), this protein is Glyceraldehyde-3-phosphate dehydrogenase (GPD).